The chain runs to 1060 residues: DNA-directed RNA polymerase subunit beta (1060 aa).

This sequence belongs to the RNA polymerase beta chain family. In terms of assembly, in plastids the minimal PEP RNA polymerase catalytic core is composed of four subunits: alpha, beta, beta', and beta''. When a (nuclear-encoded) sigma factor is associated with the core the holoenzyme is formed, which can initiate transcription.

It localises to the plastid. The protein resides in the chloroplast. The enzyme catalyses RNA(n) + a ribonucleoside 5'-triphosphate = RNA(n+1) + diphosphate. Functionally, DNA-dependent RNA polymerase catalyzes the transcription of DNA into RNA using the four ribonucleoside triphosphates as substrates. The sequence is that of DNA-directed RNA polymerase subunit beta from Helianthus annuus (Common sunflower).